Here is a 569-residue protein sequence, read N- to C-terminus: MNGVLCSSSSSFHSYPSIFTKFQSSPIWSFSISVTPLCSRRAKRMAHSIARDTLGLTHTNQSDAPKISFAAKEIDLVEWKGDILTVGATEKDLARDGNSKFQNPLLQKLDSKLSGLLSEASSEEDFSGKAGQSTILRLPGLGSKRIALVGLGSPTSSTAAYRCLGEAAAAAAKSAQASNIAIALASTDGLSAELKLSSASAITTGAVLGTFEDNRFKSESKKPTLKSLDILGLGTGPEIEKKIKYAADVCAGVILGRELVNAPANVLTPAVLAEEAKKIASTYSDVFSANILDVEQCKELKMGSYLRVAAASANPAHFIHLCYKPSSGEIKKKIALVGKGLTFDSGGYNIKTGPGCSIELMKFDMGGAAAVLGAAKALGQIKPAGVEVHFIVAACENMISGTGMRPGDIITASNGKTIEVNNTDAEGRLTLSVGISCNQGVEKIVDLATLTGACVVALGPSIAGIFTPSDDLAKEVVAASEVSGEKLWRLPMEDSYWDSMKSGVADMVNTGGRPGGAITAALFLKQFVNEKVQWMHIDLAGPVWSDKKKNATGFGVSTLVEWVLKNSTN.

The N-terminal 48 residues, 1–48, are a transit peptide targeting the chloroplast; that stretch reads MNGVLCSSSSSFHSYPSIFTKFQSSPIWSFSISVTPLCSRRAKRMAHS. The Mn(2+) site is built by Lys339 and Asp344. Lys351 is an active-site residue. Asp364, Asp424, and Glu426 together coordinate Mn(2+). Residue Arg428 is part of the active site.

Belongs to the peptidase M17 family. As to quaternary structure, homohexamer (dimer of homotrimers). Mn(2+) serves as cofactor. Expressed constitutively at low levels. Expressed in vegetative and reproductive organs, including leaves, stems, roots, cotyledons (after imbibition), pistils, sepals, petals, stamens, and floral buds (at protein level). Present at very low levels in healthy leaves.

Its subcellular location is the plastid. It localises to the chloroplast. It catalyses the reaction Release of an N-terminal amino acid, Xaa-|-Yaa-, in which Xaa is preferably Leu, but may be other amino acids including Pro although not Arg or Lys, and Yaa may be Pro. Amino acid amides and methyl esters are also readily hydrolyzed, but rates on arylamides are exceedingly low.. The catalysed reaction is Release of N-terminal proline from a peptide.. Its function is as follows. Catalyzes the removal of unsubstituted N-terminal amino acids from various peptides. When associated as homohexamer, catalyzes the proteolyzes of Xaa-Leu dipeptides. Possesses leucine aminopeptidase activity against the model substrate leucine-amido methyl coumarin. Presumably involved in the processing and regular turnover of intracellular proteins. Functions as a molecular chaperone to protect proteins from heat-induced damage. In Solanum lycopersicum (Tomato), this protein is Neutral leucine aminopeptidase, chloroplastic.